A 204-amino-acid chain; its full sequence is MNTQPLRVGIGGPVGSGKTALTLALCLALRERYNLAVVTNDIYTREDADFLVRNEALAPERIIGVETGGCPHTAIREDASINLEAVDQLNRRFPGLDLILVESGGDNLSATFSPELSDLTIYVIDVSAGDKLPRKGGPGICKSDLLVINKIDLAPLVGASLEMMNSDTQRMRNGKPFVFSNQKTGQGLEEIIAFIERQGLLTAA.

GTP is bound at residue G12–T19.

It belongs to the SIMIBI class G3E GTPase family. UreG subfamily. As to quaternary structure, homodimer. UreD, UreF and UreG form a complex that acts as a GTP-hydrolysis-dependent molecular chaperone, activating the urease apoprotein by helping to assemble the nickel containing metallocenter of UreC. The UreE protein probably delivers the nickel.

The protein resides in the cytoplasm. In terms of biological role, facilitates the functional incorporation of the urease nickel metallocenter. This process requires GTP hydrolysis, probably effectuated by UreG. The polypeptide is Urease accessory protein UreG (Pseudomonas fluorescens (strain Pf0-1)).